Reading from the N-terminus, the 406-residue chain is Probable sphingosine-1-phosphate phosphatase (406 aa).

Transmembrane regions (helical) follow at residues 66-86 and 92-112; these read ILGE…CVAT and LCVV…TFTL. Residues 107–115 form a phosphatase sequence motif I region; sequence KNTFTLPRP. Residues 133–136 are phosphatase sequence motif II; it reads PSTH. H136 serves as the catalytic Proton donor. Transmembrane regions (helical) follow at residues 138-158 and 162-182; these read ASAF…FPTI and FNIS…SVMF. Positions 183 to 194 are phosphatase sequence motif III; it reads SRLYNGHHTPMD. H190 acts as the Nucleophile in catalysis. Helical transmembrane passes span 193 to 213, 225 to 245, 254 to 274, 313 to 333, and 374 to 394; these read MDVI…TYQL, TFLF…FFHP, AYPE…SLWL, ILIG…FFFF, and LFVY…FYYL.

The protein belongs to the type 2 lipid phosphate phosphatase family.

It localises to the endoplasmic reticulum membrane. Functionally, has enzymatic activity against both sphingosine 1 phosphate (S1P) and dihydro-S1P. Regulates intracellular and extracellular S1P levels. The polypeptide is Probable sphingosine-1-phosphate phosphatase (sppA) (Dictyostelium discoideum (Social amoeba)).